Consider the following 549-residue polypeptide: Tight junction-associated protein 1 (549 aa).

The disordered stretch occupies residues 1-34 (MSSAAPAKKPYRKAPPEHRELRLEIPVSRLEQEE). Basic and acidic residues predominate over residues 14 to 23 (APPEHRELRL). The stretch at 42-171 (MKLLQQENEE…EELNERYRLD (130 aa)) forms a coiled coil. Disordered stretches follow at residues 207-226 (RSGQ…LSPG) and 266-322 (VDMS…PLYP). Serine 295 carries the phosphoserine modification. Over residues 311–320 (YPTPSPPHPL) the composition is skewed to pro residues. Threonine 313 carries the post-translational modification Phosphothreonine. Serine 315 and serine 340 each carry phosphoserine. Disordered regions lie at residues 359 to 404 (EDGS…SEED), 410 to 429 (QRAF…RTAF), and 434 to 549 (LPEL…TVLS). The segment covering 369–383 (SVPSSPASAQGSPHH) has biased composition (polar residues). Positions 389-400 (PSALSAPASSAS) are enriched in low complexity. Residue threonine 417 is modified to Phosphothreonine. Position 483 is a phosphoserine (serine 483). Basic and acidic residues predominate over residues 485–498 (EEERQSLLPDKEGT). Positions 522–534 (RSPKRMGVHHLHR) are enriched in basic residues. At serine 537 the chain carries Phosphoserine. Positions 538 to 549 (LTQAQEQGTVLS) are enriched in polar residues.

As to quaternary structure, interacts with DLG1. Interacts with ARF6 (GTP-bound form). In terms of tissue distribution, widely expressed including in adult thymus, heart, lung, liver, small intestine, kidney, spleen, testis and skeletal muscle and in embryonic brain but not detected in adult brain (at protein level).

Its subcellular location is the golgi apparatus. It localises to the trans-Golgi network. It is found in the cell junction. The protein resides in the tight junction. The protein localises to the cell membrane. Its function is as follows. Plays a role in regulating the structure of the Golgi apparatus. This Mus musculus (Mouse) protein is Tight junction-associated protein 1.